The primary structure comprises 102 residues: NADH-quinone oxidoreductase subunit K (102 aa).

The next 3 membrane-spanning stretches (helical) occupy residues 5-25 (IAHYLTVSAILFTLGVFGIFL), 31-51 (IVILMSIELILLSVNLNFVAF), and 66-86 (FVLTVAAAEAAIGLAILVVFF).

It belongs to the complex I subunit 4L family. NDH-1 is composed of 14 different subunits. Subunits NuoA, H, J, K, L, M, N constitute the membrane sector of the complex.

Its subcellular location is the cell inner membrane. The enzyme catalyses a quinone + NADH + 5 H(+)(in) = a quinol + NAD(+) + 4 H(+)(out). Functionally, NDH-1 shuttles electrons from NADH, via FMN and iron-sulfur (Fe-S) centers, to quinones in the respiratory chain. The immediate electron acceptor for the enzyme in this species is believed to be ubiquinone. Couples the redox reaction to proton translocation (for every two electrons transferred, four hydrogen ions are translocated across the cytoplasmic membrane), and thus conserves the redox energy in a proton gradient. In Brucella abortus (strain S19), this protein is NADH-quinone oxidoreductase subunit K.